A 699-amino-acid chain; its full sequence is Ferric reduction oxidase 4 (699 aa).

Over 1 to 9 the chain is Cytoplasmic; the sequence is MGNMRSLVK. A helical transmembrane segment spans residues 10–29; it reads TLMVVLFLGWILVWIMISTN. The Lumenal portion of the chain corresponds to 30–54; sequence LFKSKWTPKLSKYLNTTYFGPQGTN. Residues 55 to 73 form a helical membrane-spanning segment; sequence LVLLTVPMMFIAVLSCVYL. At 74–101 the chain is on the cytoplasmic side; the sequence is HIQKKPTQPQREWKLKRIMGRVIMVMNP. A helical membrane pass occupies residues 102-125; it reads LGIVTATELTFSLLFVALLAWSLY. At 126–190 the chain is on the lumenal side; that stretch reads NYLYLSYHVH…VGLTSESSIK (65 aa). One can recognise a Ferric oxidoreductase domain in the interval 157–275; it reads GYVGNICWAF…HHLYGLYIVF (119 aa). Residues 191 to 214 form a helical membrane-spanning segment; it reads YHIWLGHVSNFCFLVHTVVFLIYW. Residues His-192 and His-206 each contribute to the heme site. Over 215–264 the chain is Cytoplasmic; it reads AMINKLMETFAWNPTYVPNLAGTIAMVIGIAMWVTSLPSFRRKKFEIFFY. Residues 265–289 form a helical membrane-spanning segment; sequence THHLYGLYIVFYVIHVGDSWFCMIL. Residues His-266 and His-279 each coordinate heme. The Lumenal segment spans residues 290-311; that stretch reads PNIFLFFIDRYLRFLQSTKRSR. Residues 305–408 form the FAD-binding FR-type domain; it reads QSTKRSRLVS…EGPYGPNSFD (104 aa). A helical transmembrane segment spans residues 312-332; it reads LVSARILPSDNLELTFSKTPG. The Cytoplasmic segment spans residues 333 to 525; that stretch reads LHYTPTSILF…PISPVLGPNN (193 aa). 354–357 lines the FAD pocket; sequence HPFT. 400 to 403 provides a ligand contact to NAD(+); sequence GPYG. The chain crosses the membrane as a helical span at residues 526–548; sequence FLWLGVVILSSFVMFLLLIGIVT. Residues 549-568 lie on the Lumenal side of the membrane; it reads RYYIYPVDHNTGSIYNFSYR. A helical transmembrane segment spans residues 569-590; that stretch reads GLWDMFLGSACIFISSSVVFLW. Residues 591 to 699 lie on the Cytoplasmic side of the membrane; sequence RKKQNKEGDK…LHFEAISFNW (109 aa).

It belongs to the ferric reductase (FRE) family. FAD is required as a cofactor. In terms of tissue distribution, expressed in siliques. Detected at low levels in roots, cotyledon veins and shoots.

Its subcellular location is the membrane. The enzyme catalyses 2 a Fe(II)-siderophore + NAD(+) + H(+) = 2 a Fe(III)-siderophore + NADH. Ferric chelate reductase. May participate in the transport of electrons to a Fe(3+) ion via FAD and heme intermediates. May function as root surface cupric chelate reductase and participate in the reduction of Cu(2+), for Cu(+) acquisition via Cu(+) transporters in response to copper deficiency. In Arabidopsis thaliana (Mouse-ear cress), this protein is Ferric reduction oxidase 4 (FRO4).